The sequence spans 32 residues: Dermatoxin-J1 (32 aa).

Glutamine 32 is modified (glutamine amide).

As to expression, expressed by the skin glands.

The protein localises to the secreted. In terms of biological role, antimicrobial peptide. The chain is Dermatoxin-J1 from Phasmahyla jandaia (Jandaia leaf frog).